Consider the following 61-residue polypeptide: Large ribosomal subunit protein uL30 (61 aa).

This sequence belongs to the universal ribosomal protein uL30 family. Part of the 50S ribosomal subunit.

In Chlorobium luteolum (strain DSM 273 / BCRC 81028 / 2530) (Pelodictyon luteolum), this protein is Large ribosomal subunit protein uL30.